A 99-amino-acid chain; its full sequence is Nucleoid-associated protein SPN23F10240 (99 aa).

Belongs to the YbaB/EbfC family. As to quaternary structure, homodimer.

The protein resides in the cytoplasm. Its subcellular location is the nucleoid. In terms of biological role, binds to DNA and alters its conformation. May be involved in regulation of gene expression, nucleoid organization and DNA protection. The chain is Nucleoid-associated protein SPN23F10240 from Streptococcus pneumoniae (strain ATCC 700669 / Spain 23F-1).